Reading from the N-terminus, the 439-residue chain is GTPase Der (439 aa).

EngA-type G domains follow at residues 4-166 and 175-350; these read PIVA…PAQD and IRIA…EEAS. Residues 10–17, 57–61, 119–122, 181–188, 228–232, and 293–296 each bind GTP; these read GRPNVGKS, DTGGL, NKVE, DTAGM, and NKWD. Residues 351–435 form the KH-like domain; it reads KRVATADLNN…PIRFFLRKRE (85 aa).

The protein belongs to the TRAFAC class TrmE-Era-EngA-EngB-Septin-like GTPase superfamily. EngA (Der) GTPase family. In terms of assembly, associates with the 50S ribosomal subunit.

GTPase that plays an essential role in the late steps of ribosome biogenesis. The sequence is that of GTPase Der from Desulforamulus reducens (strain ATCC BAA-1160 / DSM 100696 / MI-1) (Desulfotomaculum reducens).